The sequence spans 153 residues: 6,7-dimethyl-8-ribityllumazine synthase (153 aa).

5-amino-6-(D-ribitylamino)uracil is bound by residues F22, 56-58 (AFE), and 80-82 (CVI). 85 to 86 (AT) lines the (2S)-2-hydroxy-3-oxobutyl phosphate pocket. The active-site Proton donor is the H88. F113 serves as a coordination point for 5-amino-6-(D-ribitylamino)uracil. Residue R127 coordinates (2S)-2-hydroxy-3-oxobutyl phosphate.

It belongs to the DMRL synthase family.

It catalyses the reaction (2S)-2-hydroxy-3-oxobutyl phosphate + 5-amino-6-(D-ribitylamino)uracil = 6,7-dimethyl-8-(1-D-ribityl)lumazine + phosphate + 2 H2O + H(+). The protein operates within cofactor biosynthesis; riboflavin biosynthesis; riboflavin from 2-hydroxy-3-oxobutyl phosphate and 5-amino-6-(D-ribitylamino)uracil: step 1/2. Its function is as follows. Catalyzes the formation of 6,7-dimethyl-8-ribityllumazine by condensation of 5-amino-6-(D-ribitylamino)uracil with 3,4-dihydroxy-2-butanone 4-phosphate. This is the penultimate step in the biosynthesis of riboflavin. In Endomicrobium trichonymphae, this protein is 6,7-dimethyl-8-ribityllumazine synthase.